The sequence spans 124 residues: Large ribosomal subunit protein bL12 (124 aa).

It belongs to the bacterial ribosomal protein bL12 family. In terms of assembly, homodimer. Part of the ribosomal stalk of the 50S ribosomal subunit. Forms a multimeric L10(L12)X complex, where L10 forms an elongated spine to which 2 to 4 L12 dimers bind in a sequential fashion. Binds GTP-bound translation factors.

Its function is as follows. Forms part of the ribosomal stalk which helps the ribosome interact with GTP-bound translation factors. Is thus essential for accurate translation. This chain is Large ribosomal subunit protein bL12, found in Allorhizobium ampelinum (strain ATCC BAA-846 / DSM 112012 / S4) (Agrobacterium vitis (strain S4)).